A 166-amino-acid polypeptide reads, in one-letter code: Cyclic pyranopterin monophosphate synthase (166 aa).

Substrate is bound by residues M75–H77 and M115–E116. D130 is an active-site residue.

It belongs to the MoaC family. As to quaternary structure, homohexamer; trimer of dimers.

The enzyme catalyses (8S)-3',8-cyclo-7,8-dihydroguanosine 5'-triphosphate = cyclic pyranopterin phosphate + diphosphate. It functions in the pathway cofactor biosynthesis; molybdopterin biosynthesis. Catalyzes the conversion of (8S)-3',8-cyclo-7,8-dihydroguanosine 5'-triphosphate to cyclic pyranopterin monophosphate (cPMP). This Shouchella clausii (strain KSM-K16) (Alkalihalobacillus clausii) protein is Cyclic pyranopterin monophosphate synthase.